Reading from the N-terminus, the 462-residue chain is Ribosomal protein uS12 methylthiotransferase RimO (462 aa).

In terms of domain architecture, MTTase N-terminal spans 22 to 133; sequence ASVAFLHLGC…IIEVLQRVRQ (112 aa). Cys31, Cys67, Cys96, Cys171, Cys175, and Cys178 together coordinate [4Fe-4S] cluster. A Radical SAM core domain is found at 157–386; it reads TTGRFVSYLK…VAIQQPISAA (230 aa). The 72-residue stretch at 389 to 460 folds into the TRAM domain; the sequence is QALIGQTVDV…LYDLTGEINH (72 aa).

It belongs to the methylthiotransferase family. RimO subfamily. Requires [4Fe-4S] cluster as cofactor.

The protein localises to the cytoplasm. It catalyses the reaction L-aspartate(89)-[ribosomal protein uS12]-hydrogen + (sulfur carrier)-SH + AH2 + 2 S-adenosyl-L-methionine = 3-methylsulfanyl-L-aspartate(89)-[ribosomal protein uS12]-hydrogen + (sulfur carrier)-H + 5'-deoxyadenosine + L-methionine + A + S-adenosyl-L-homocysteine + 2 H(+). Its function is as follows. Catalyzes the methylthiolation of an aspartic acid residue of ribosomal protein uS12. This Prochlorococcus marinus (strain MIT 9211) protein is Ribosomal protein uS12 methylthiotransferase RimO.